We begin with the raw amino-acid sequence, 491 residues long: 3-octaprenyl-4-hydroxybenzoate carboxy-lyase (491 aa).

Asparagine 172 contributes to the Mn(2+) binding site. Prenylated FMN-binding positions include 175–177 (IYR), 189–191 (RWL), and 194–195 (RG). Glutamate 238 contributes to the Mn(2+) binding site. Aspartate 287 (proton donor) is an active-site residue.

It belongs to the UbiD family. As to quaternary structure, homohexamer. Prenylated FMN serves as cofactor. Requires Mn(2+) as cofactor.

The protein localises to the cell membrane. The catalysed reaction is a 4-hydroxy-3-(all-trans-polyprenyl)benzoate + H(+) = a 2-(all-trans-polyprenyl)phenol + CO2. It functions in the pathway cofactor biosynthesis; ubiquinone biosynthesis. Catalyzes the decarboxylation of 3-octaprenyl-4-hydroxy benzoate to 2-octaprenylphenol, an intermediate step in ubiquinone biosynthesis. The sequence is that of 3-octaprenyl-4-hydroxybenzoate carboxy-lyase from Histophilus somni (strain 2336) (Haemophilus somnus).